Consider the following 495-residue polypeptide: Cytochrome P450 monooxygenase 88 (495 aa).

The helical transmembrane segment at 2-22 (FLQIVTSVLATGLLYALISVL) threads the bilayer. N-linked (GlcNAc...) asparagine glycosylation is found at N25 and N198. Position 428 (C428) interacts with heme.

Belongs to the cytochrome P450 family. It depends on heme as a cofactor.

The protein resides in the membrane. It participates in secondary metabolite biosynthesis. Its function is as follows. Cytochrome P450 monooxygenase that is able to use 4-ethoxybenzoic acid as a substrate for oxidation. This chain is Cytochrome P450 monooxygenase 88, found in Postia placenta (strain ATCC 44394 / Madison 698-R) (Brown rot fungus).